Consider the following 414-residue polypeptide: Enolase (414 aa).

Q162 contacts (2R)-2-phosphoglycerate. The active-site Proton donor is the E204. 3 residues coordinate Mg(2+): D239, E280, and D307. Positions 332, 361, 362, and 383 each coordinate (2R)-2-phosphoglycerate. K332 functions as the Proton acceptor in the catalytic mechanism.

Belongs to the enolase family. The cofactor is Mg(2+).

The protein localises to the cytoplasm. Its subcellular location is the secreted. The protein resides in the cell surface. It catalyses the reaction (2R)-2-phosphoglycerate = phosphoenolpyruvate + H2O. Its pathway is carbohydrate degradation; glycolysis; pyruvate from D-glyceraldehyde 3-phosphate: step 4/5. In terms of biological role, catalyzes the reversible conversion of 2-phosphoglycerate (2-PG) into phosphoenolpyruvate (PEP). It is essential for the degradation of carbohydrates via glycolysis. The protein is Enolase of Campylobacter jejuni subsp. jejuni serotype O:2 (strain ATCC 700819 / NCTC 11168).